The primary structure comprises 774 residues: Dapper homolog 2 (774 aa).

A coiled-coil region spans residues 67-93 (PEQQLEAALAALQEQLSRLRQQDIGLK). 4 disordered regions span residues 188–225 (RPQA…LDRA), 295–319 (TPQR…TIQT), 345–500 (TPAK…EKIK), and 624–710 (CPES…GAQS). Polar residues predominate over residues 438 to 452 (VQASPSSKAQQTPSA). The segment covering 637–648 (RRAGGPLARGRP) has biased composition (low complexity). Composition is skewed to basic and acidic residues over residues 655–672 (AYTR…ECDP) and 686–700 (SSDH…RESS). The PDZ-binding signature appears at 771–774 (MTMV).

This sequence belongs to the dapper family. As to quaternary structure, can form homodimers and heterodimers with DACT1 or DACT3. Interacts with CSNK1D, PKA catalytic subunit, PKC-type kinase, CSNK2B, DVL1, DVL2, DVL3, VANGL1, VANGL2, TGFBR1, CTNNB1, CTNND2, CTNND1, LEF1, TCF7, TCF7L1 and HDAC1.

Involved in regulation of intracellular signaling pathways during development. Negatively regulates the Nodal signaling pathway, possibly by promoting the lysosomal degradation of Nodal receptors, such as TGFBR1. May be involved in control of the morphogenetic behavior of kidney ureteric bud cells by keeping cells epithelial and restraining their mesenchymal character. May play an inhibitory role in the re-epithelialization of skin wounds by attenuating TGF-beta signaling. The sequence is that of Dapper homolog 2 (DACT2) from Homo sapiens (Human).